The sequence spans 246 residues: Agamous-like MADS-box protein AGL5 (246 aa).

One can recognise an MADS-box domain in the interval 18-72; it reads RGKIEIKRIENTTNRQVTFCKRRNGLLKKAYELSVLCDAEVALVIFSTRGRLYEY. The 91-residue stretch at 102 to 192 folds into the K-box domain; that stretch reads TQYYQQEASK…RSKITERTGL (91 aa).

As to quaternary structure, interacts with AGL15 and AGL16.

It localises to the nucleus. Probable transcription factor. Interacts genetically with TT16/AGL32 in a partially antagonistic manner during flower development. Is essential for the coordination of cell divisions in ovule, seed coat development and endosperm formation. The protein is Agamous-like MADS-box protein AGL5 (AGL5) of Arabidopsis thaliana (Mouse-ear cress).